The following is a 116-amino-acid chain: Large ribosomal subunit protein uL18 (116 aa).

Belongs to the universal ribosomal protein uL18 family. In terms of assembly, part of the 50S ribosomal subunit; part of the 5S rRNA/L5/L18/L25 subcomplex. Contacts the 5S and 23S rRNAs.

Functionally, this is one of the proteins that bind and probably mediate the attachment of the 5S RNA into the large ribosomal subunit, where it forms part of the central protuberance. This chain is Large ribosomal subunit protein uL18, found in Saccharophagus degradans (strain 2-40 / ATCC 43961 / DSM 17024).